A 531-amino-acid chain; its full sequence is Peptide chain release factor 3 (531 aa).

Positions 13–282 constitute a tr-type G domain; sequence AKRRTFAIIS…TLIEHAPPPK (270 aa). GTP-binding positions include 22–29, 90–94, and 144–147; these read SHPDAGKT, DTPGH, and NKLD.

This sequence belongs to the TRAFAC class translation factor GTPase superfamily. Classic translation factor GTPase family. PrfC subfamily.

Its subcellular location is the cytoplasm. In terms of biological role, increases the formation of ribosomal termination complexes and stimulates activities of RF-1 and RF-2. It binds guanine nucleotides and has strong preference for UGA stop codons. It may interact directly with the ribosome. The stimulation of RF-1 and RF-2 is significantly reduced by GTP and GDP, but not by GMP. The polypeptide is Peptide chain release factor 3 (Psychrobacter sp. (strain PRwf-1)).